Reading from the N-terminus, the 158-residue chain is SsrA-binding protein (158 aa).

Positions 135-158 are disordered; that stretch reads DKRKTLKDRDWERDKQRGFKKDLD. The segment covering 141–158 has biased composition (basic and acidic residues); sequence KDRDWERDKQRGFKKDLD.

The protein belongs to the SmpB family.

The protein localises to the cytoplasm. Its function is as follows. Required for rescue of stalled ribosomes mediated by trans-translation. Binds to transfer-messenger RNA (tmRNA), required for stable association of tmRNA with ribosomes. tmRNA and SmpB together mimic tRNA shape, replacing the anticodon stem-loop with SmpB. tmRNA is encoded by the ssrA gene; the 2 termini fold to resemble tRNA(Ala) and it encodes a 'tag peptide', a short internal open reading frame. During trans-translation Ala-aminoacylated tmRNA acts like a tRNA, entering the A-site of stalled ribosomes, displacing the stalled mRNA. The ribosome then switches to translate the ORF on the tmRNA; the nascent peptide is terminated with the 'tag peptide' encoded by the tmRNA and targeted for degradation. The ribosome is freed to recommence translation, which seems to be the essential function of trans-translation. In Psychrobacter arcticus (strain DSM 17307 / VKM B-2377 / 273-4), this protein is SsrA-binding protein.